Reading from the N-terminus, the 400-residue chain is Putative cytochrome P450 141 (400 aa).

A run of 2 helical transmembrane segments spans residues 225–245 (VVGMLLTVVIGGVDTPIAVIT) and 294–314 (VVIAGTALSAGSPAFTSITSA). Cys-346 provides a ligand contact to heme.

This sequence belongs to the cytochrome P450 family. Heme serves as cofactor.

Its subcellular location is the cell membrane. This chain is Putative cytochrome P450 141 (cyp141), found in Mycobacterium tuberculosis (strain CDC 1551 / Oshkosh).